The following is a 132-amino-acid chain: Small ribosomal subunit protein uS8c (132 aa).

It belongs to the universal ribosomal protein uS8 family. In terms of assembly, part of the 30S ribosomal subunit.

The protein resides in the plastid. The protein localises to the chloroplast. In terms of biological role, one of the primary rRNA binding proteins, it binds directly to 16S rRNA central domain where it helps coordinate assembly of the platform of the 30S subunit. The protein is Small ribosomal subunit protein uS8c (rps8) of Zygnema circumcarinatum (Green alga).